A 149-amino-acid polypeptide reads, in one-letter code: Large ribosomal subunit protein bL9 (149 aa).

The protein belongs to the bacterial ribosomal protein bL9 family.

Functionally, binds to the 23S rRNA. The protein is Large ribosomal subunit protein bL9 of Amoebophilus asiaticus (strain 5a2).